A 198-amino-acid polypeptide reads, in one-letter code: dCTP deaminase, dUMP-forming (198 aa).

DCTP-binding positions include 115 to 120 (KSSIAR), aspartate 133, 141 to 143 (TLE), glutamine 162, tyrosine 175, and lysine 184. Residue glutamate 143 is the Proton donor/acceptor of the active site.

Belongs to the dCTP deaminase family. As to quaternary structure, homotrimer.

The catalysed reaction is dCTP + 2 H2O = dUMP + NH4(+) + diphosphate. It functions in the pathway pyrimidine metabolism; dUMP biosynthesis; dUMP from dCTP: step 1/1. Bifunctional enzyme that catalyzes both the deamination of dCTP to dUTP and the hydrolysis of dUTP to dUMP without releasing the toxic dUTP intermediate. In Nanoarchaeum equitans (strain Kin4-M), this protein is dCTP deaminase, dUMP-forming.